Reading from the N-terminus, the 243-residue chain is Protein DMP8 (243 aa).

The interval 1-37 is disordered; it reads MEKTEESVGIRVYTTTTTQNPSPTSSRSPKPVPLSSL. Positions 14–29 are enriched in low complexity; it reads TTTTTQNPSPTSSRSP. 4 helical membrane passes run 70–90, 98–118, 174–194, and 212–232; these read MLVN…LPTI, GINT…CFFF, VNDF…AFSD, and VMES…LVFP.

Belongs to the plant DMP1 protein family. As to expression, restricted to flowers.

The protein localises to the endoplasmic reticulum membrane. The protein resides in the vacuole membrane. Involved in membrane remodeling. This Arabidopsis thaliana (Mouse-ear cress) protein is Protein DMP8.